The primary structure comprises 508 residues: Flavonoid 3'-monooxygenase CYP75B137 (508 aa).

Residues 2-22 (LTFFFLWISTLLLSSFIVYLL) traverse the membrane as a helical segment. Position 445 (Cys-445) interacts with heme.

This sequence belongs to the cytochrome P450 family. It depends on heme as a cofactor. As to expression, expressed in young cromes.

It is found in the membrane. The catalysed reaction is a 3'-unsubstituted flavone + reduced [NADPH--hemoprotein reductase] + O2 = a 3'-hydroxyflavone + oxidized [NADPH--hemoprotein reductase] + H2O + H(+). It catalyses the reaction (2S)-naringenin + reduced [NADPH--hemoprotein reductase] + O2 = (S)-eriodictyol + oxidized [NADPH--hemoprotein reductase] + H2O + H(+). The enzyme catalyses (2R,3R)-dihydrokaempferol + reduced [NADPH--hemoprotein reductase] + O2 = (2R,3R)-dihydroquercetin + oxidized [NADPH--hemoprotein reductase] + H2O + H(+). It carries out the reaction kaempferol + reduced [NADPH--hemoprotein reductase] + O2 = quercetin + oxidized [NADPH--hemoprotein reductase] + H2O + H(+). The protein operates within flavonoid metabolism. Its function is as follows. Flavonoid 3'-hydroxylase that catalyzes the 3'-hydroxylation of flavanones, dihydroflavonols and flavonols. Converts narigenin to eriodictyol, dihydrokaempferol to dihydroquercetin and kaempferol to quercetin. The sequence is that of Flavonoid 3'-monooxygenase CYP75B137 from Crocosmia x crocosmiiflora (Montbretia).